The sequence spans 569 residues: Probable protein phosphatase 2C BIPP2C1 (569 aa).

Disordered regions lie at residues 120–214 and 251–279; these read EVSP…KVTG and SLDDSEASDGSTTQDFDTDVETESSGSSI. A compositionally biased stretch (basic and acidic residues) spans 179–188; the sequence is ESERGSDADG. The region spanning 329-564 is the PPM-type phosphatase domain; that stretch reads AAMLPHPSKV…DDVTVVVSVV (236 aa). Mn(2+) is bound by residues Asp358, Gly359, Asp488, and Asp555.

This sequence belongs to the PP2C family. Mg(2+) is required as a cofactor. It depends on Mn(2+) as a cofactor.

It carries out the reaction O-phospho-L-seryl-[protein] + H2O = L-seryl-[protein] + phosphate. The enzyme catalyses O-phospho-L-threonyl-[protein] + H2O = L-threonyl-[protein] + phosphate. Its function is as follows. May play a role in responses to biotic and abiotic stresses. In Oryza sativa subsp. japonica (Rice), this protein is Probable protein phosphatase 2C BIPP2C1 (BIPP2C1).